A 630-amino-acid chain; its full sequence is ATP synthase subunit alpha (630 aa).

173-180 lines the ATP pocket; the sequence is GDRQTGKT. Residues 592 to 630 are disordered; it reads AGGASTAADEDGAGDDEEEAPAPKAKSKNAKSASKAKEK. Residues 599-611 show a composition bias toward acidic residues; the sequence is ADEDGAGDDEEEA.

It belongs to the ATPase alpha/beta chains family. As to quaternary structure, F-type ATPases have 2 components, CF(1) - the catalytic core - and CF(0) - the membrane proton channel. CF(1) has five subunits: alpha(3), beta(3), gamma(1), delta(1), epsilon(1). CF(0) has three main subunits: a(1), b(2) and c(9-12). The alpha and beta chains form an alternating ring which encloses part of the gamma chain. CF(1) is attached to CF(0) by a central stalk formed by the gamma and epsilon chains, while a peripheral stalk is formed by the delta and b chains.

It is found in the cell inner membrane. The catalysed reaction is ATP + H2O + 4 H(+)(in) = ADP + phosphate + 5 H(+)(out). In terms of biological role, produces ATP from ADP in the presence of a proton gradient across the membrane. The alpha chain is a regulatory subunit. The sequence is that of ATP synthase subunit alpha from Sorangium cellulosum (strain So ce56) (Polyangium cellulosum (strain So ce56)).